The chain runs to 1666 residues: Atrochrysone carboxylic acid synthase PKS4 (1666 aa).

The Ketosynthase family 3 (KS3) domain maps to 15–452 (FEPIAIVGIG…GNAGFMVIEE (438 aa)). Active-site for beta-ketoacyl synthase activity residues include C194, H332, and H372. Residues 555 to 863 (AFCFSGQGGE…WMTALDALMR (309 aa)) form a malonyl-CoA:ACP transacylase (MAT) domain region. The active-site For acyl/malonyl transferase activity is S632. The tract at residues 905 to 1034 (REVKASSTML…EQDLLESLSL (130 aa)) is N-terminal hotdog fold. The region spanning 905-1206 (REVKASSTML…MAKMKIYVLK (302 aa)) is the PKS/mFAS DH domain. The interval 935-1203 (LLNHVMAGYT…DVRMAKMKIY (269 aa)) is product template (PT) domain. The segment at 1050–1206 (STDVLRKELA…MAKMKIYVLK (157 aa)) is C-terminal hotdog fold. O-(pantetheine 4'-phosphoryl)serine is present on S1269. The Carrier domain maps to 1331–1395 (ATSPSLPIMP…TSTEPSQTLV (65 aa)). The proline-rich linker region stretch occupies residues 1334–1397 (PSLPIMPNGV…TEPSQTLVAN (64 aa)). Residues 1444-1529 (TVIGIHCPGL…PPGVVGLTAQ (86 aa)) form an alpha/beta hydrolase superfamily-type thioesterase (TE) domain region.

It carries out the reaction holo-[ACP] + 8 malonyl-CoA + 8 H(+) = atrochrysone carboxyl-[ACP] + 8 CO2 + 8 CoA + 2 H2O. Its pathway is secondary metabolite biosynthesis. Functionally, non-reducing polyketide synthase that synthesizes the universal anthraquinone precursor atrochrysone carboxylic acid from malonyl-CoA. Produces a mixture of both 3R and 3S enantiomers with an excess of the 3S form. PKS4 catalyzes both hepta- and octaketide synthesis and also yields 6-hydroxymusizin, probably via carboxylating activity inherent to the KS domain. In Calonarius odorifer (Mushroom), this protein is Atrochrysone carboxylic acid synthase PKS4.